We begin with the raw amino-acid sequence, 362 residues long: RING-H2 finger protein ATL52 (362 aa).

A helical membrane pass occupies residues 58–78 (LIALIGILTSALILVSYYTLI). The segment at 142-184 (CSVCLSEFEENESLRLLPKCNHAFHLPCIDTWLKSHSNCPLCR) adopts an RING-type; atypical zinc-finger fold. Disordered regions lie at residues 252 to 271 (DARS…DEDS) and 296 to 333 (EDEE…RSGG). Residues 309-319 (QRREEGEDGDG) show a composition bias toward basic and acidic residues.

The protein belongs to the RING-type zinc finger family. ATL subfamily. Expressed in flowers.

It is found in the membrane. The catalysed reaction is S-ubiquitinyl-[E2 ubiquitin-conjugating enzyme]-L-cysteine + [acceptor protein]-L-lysine = [E2 ubiquitin-conjugating enzyme]-L-cysteine + N(6)-ubiquitinyl-[acceptor protein]-L-lysine.. It participates in protein modification; protein ubiquitination. This chain is RING-H2 finger protein ATL52 (ATL52), found in Arabidopsis thaliana (Mouse-ear cress).